Here is a 651-residue protein sequence, read N- to C-terminus: Acetyl-coenzyme A synthetase (651 aa).

CoA is bound by residues 189–192 (RGGK), Thr311, and Asn335. Residues 387-389 (GEP), 411-416 (DTWWQT), Asp500, and Arg515 contribute to the ATP site. A CoA-binding site is contributed by Ser523. Arg526 contributes to the ATP binding site. Residues Val537, His539, and Val542 each contribute to the Mg(2+) site. A CoA-binding site is contributed by Arg584. The residue at position 609 (Lys609) is an N6-acetyllysine.

The protein belongs to the ATP-dependent AMP-binding enzyme family. Mg(2+) serves as cofactor. Acetylated. Deacetylation by the SIR2-homolog deacetylase activates the enzyme.

The catalysed reaction is acetate + ATP + CoA = acetyl-CoA + AMP + diphosphate. Its function is as follows. Catalyzes the conversion of acetate into acetyl-CoA (AcCoA), an essential intermediate at the junction of anabolic and catabolic pathways. AcsA undergoes a two-step reaction. In the first half reaction, AcsA combines acetate with ATP to form acetyl-adenylate (AcAMP) intermediate. In the second half reaction, it can then transfer the acetyl group from AcAMP to the sulfhydryl group of CoA, forming the product AcCoA. The chain is Acetyl-coenzyme A synthetase from Rhizobium etli (strain ATCC 51251 / DSM 11541 / JCM 21823 / NBRC 15573 / CFN 42).